A 179-amino-acid polypeptide reads, in one-letter code: Diphosphoinositol polyphosphate phosphohydrolase 2 (179 aa).

Residues R9, K17–R19, and S38–R40 contribute to the substrate site. The region spanning K17–K143 is the Nudix hydrolase domain. Positions 49 and 65 each coordinate Mg(2+). Residues G50–G71 carry the Nudix box motif. The Proton acceptor role is filled by E68. E69 is a binding site for Mg(2+). Substrate-binding positions include R88–H90, R114, and K132.

The protein belongs to the Nudix hydrolase family. DIPP subfamily. Requires Mg(2+) as cofactor. Mn(2+) is required as a cofactor.

Its subcellular location is the cytoplasm. It carries out the reaction diphospho-myo-inositol polyphosphate + H2O = myo-inositol polyphosphate + phosphate.. The enzyme catalyses 5-diphospho-1D-myo-inositol 1,2,3,4,6-pentakisphosphate + H2O = 1D-myo-inositol hexakisphosphate + phosphate + H(+). The catalysed reaction is 3,5-bis(diphospho)-1D-myo-inositol 1,2,4,6-tetrakisphosphate + H2O = 3-diphospho-1D-myo-inositol 1,2,4,5,6-pentakisphosphate + phosphate + 2 H(+). It catalyses the reaction 5-diphospho-1D-myo-inositol 1,3,4,6-tetrakisphosphate + H2O = 1D-myo-inositol 1,3,4,5,6-pentakisphosphate + phosphate + H(+). It carries out the reaction P(1),P(6)-bis(5'-adenosyl) hexaphosphate + H2O = 2 ATP + 2 H(+). The enzyme catalyses P(1),P(5)-bis(5'-adenosyl) pentaphosphate + H2O = ADP + ATP + 2 H(+). The catalysed reaction is 5-phospho-alpha-D-ribose 1-diphosphate + H2O = alpha-D-ribose 1,5-bisphosphate + phosphate + H(+). Cleaves the beta-phosphate from diphosphoinositol polyphosphates such as PP-InsP5 (diphosphoinositol pentakisphosphate), PP-InsP4 (diphosphoinositol tetrakisphosphate) and [PP]2-InsP4 (bisdiphosphoinositol tetrakisphosphate), suggesting that it may play a role in signal transduction. Diadenosine polyphosphates, particularly Ap6A (P(1),P(6)-bis(5a-adenosyl) hexaphosphate) and Ap5A (P(1),P(5)-bis(5'-adenosyl) pentaphosphate) are downstream effectors of a signaling cascade that regulates cardiac KATP channels, can also be substrates, although with lower preference than the diphosphoinositol polyphosphates. Can also catalyze the hydrolysis of 5-phosphoribose 1-diphosphate, generating the glycolytic activator ribose 1,5-bisphosphate. Does not play a role in U8 snoRNA decapping activity. Binds U8 snoRNA. The sequence is that of Diphosphoinositol polyphosphate phosphohydrolase 2 from Rattus norvegicus (Rat).